Reading from the N-terminus, the 236-residue chain is 2,3,4,5-tetrahydropyridine-2,6-dicarboxylate N-acetyltransferase (236 aa).

It belongs to the transferase hexapeptide repeat family. DapH subfamily.

The enzyme catalyses (S)-2,3,4,5-tetrahydrodipicolinate + acetyl-CoA + H2O = L-2-acetamido-6-oxoheptanedioate + CoA. It functions in the pathway amino-acid biosynthesis; L-lysine biosynthesis via DAP pathway; LL-2,6-diaminopimelate from (S)-tetrahydrodipicolinate (acetylase route): step 1/3. Catalyzes the transfer of an acetyl group from acetyl-CoA to tetrahydrodipicolinate. This Clostridium perfringens (strain SM101 / Type A) protein is 2,3,4,5-tetrahydropyridine-2,6-dicarboxylate N-acetyltransferase.